A 296-amino-acid polypeptide reads, in one-letter code: Lipoyl synthase (296 aa).

The [4Fe-4S] cluster site is built by cysteine 38, cysteine 43, cysteine 49, cysteine 64, cysteine 68, cysteine 71, and serine 279. In terms of domain architecture, Radical SAM core spans 50–268; sequence WDGGCLTFMV…AEYGRSLGFK (219 aa).

Belongs to the radical SAM superfamily. Lipoyl synthase family. [4Fe-4S] cluster serves as cofactor.

The protein localises to the cytoplasm. It carries out the reaction [[Fe-S] cluster scaffold protein carrying a second [4Fe-4S](2+) cluster] + N(6)-octanoyl-L-lysyl-[protein] + 2 oxidized [2Fe-2S]-[ferredoxin] + 2 S-adenosyl-L-methionine + 4 H(+) = [[Fe-S] cluster scaffold protein] + N(6)-[(R)-dihydrolipoyl]-L-lysyl-[protein] + 4 Fe(3+) + 2 hydrogen sulfide + 2 5'-deoxyadenosine + 2 L-methionine + 2 reduced [2Fe-2S]-[ferredoxin]. It participates in protein modification; protein lipoylation via endogenous pathway; protein N(6)-(lipoyl)lysine from octanoyl-[acyl-carrier-protein]: step 2/2. Catalyzes the radical-mediated insertion of two sulfur atoms into the C-6 and C-8 positions of the octanoyl moiety bound to the lipoyl domains of lipoate-dependent enzymes, thereby converting the octanoylated domains into lipoylated derivatives. The chain is Lipoyl synthase from Methanocella arvoryzae (strain DSM 22066 / NBRC 105507 / MRE50).